The following is a 134-amino-acid chain: FK506-binding protein 2 (134 aa).

The N-terminal stretch at 1-19 (MRFSIFSTLLVSLATLSTA) is a signal peptide. Residues 39–127 (GDTVQMHYKG…IFETELVGID (89 aa)) form the PPIase FKBP-type domain. The Prevents secretion from ER motif lies at 131–134 (KDEL).

Belongs to the FKBP-type PPIase family. FKBP2 subfamily.

The protein resides in the endoplasmic reticulum. It catalyses the reaction [protein]-peptidylproline (omega=180) = [protein]-peptidylproline (omega=0). Its activity is regulated as follows. Inhibited by both FK506 and rapamycin. PPIases accelerate the folding of proteins. It catalyzes the cis-trans isomerization of proline imidic peptide bonds in oligopeptides. This chain is FK506-binding protein 2 (fpr2), found in Aspergillus oryzae (strain ATCC 42149 / RIB 40) (Yellow koji mold).